A 496-amino-acid polypeptide reads, in one-letter code: Apulose kinase (496 aa).

Residues 13 to 15 (TTN), T267, G308, and 408 to 412 (GATQN) contribute to the ATP site.

Belongs to the FGGY kinase family.

It carries out the reaction apulose + ATP = apulose 4-phosphate + ADP + H(+). The protein operates within carbohydrate metabolism. Functionally, involved in catabolism of D-apiose. Catalyzes phosphorylation of apulose to form apulose 4-phosphate. The protein is Apulose kinase of Pectobacterium atrosepticum (strain SCRI 1043 / ATCC BAA-672) (Erwinia carotovora subsp. atroseptica).